The chain runs to 607 residues: Elongation factor 4 (607 aa).

The 183-residue stretch at 11 to 193 (KNIRNFSIIA…KIVEVVPPPE (183 aa)) folds into the tr-type G domain. GTP-binding positions include 23 to 28 (DHGKST) and 140 to 143 (NKID).

Belongs to the TRAFAC class translation factor GTPase superfamily. Classic translation factor GTPase family. LepA subfamily.

Its subcellular location is the cell membrane. The catalysed reaction is GTP + H2O = GDP + phosphate + H(+). Its function is as follows. Required for accurate and efficient protein synthesis under certain stress conditions. May act as a fidelity factor of the translation reaction, by catalyzing a one-codon backward translocation of tRNAs on improperly translocated ribosomes. Back-translocation proceeds from a post-translocation (POST) complex to a pre-translocation (PRE) complex, thus giving elongation factor G a second chance to translocate the tRNAs correctly. Binds to ribosomes in a GTP-dependent manner. This chain is Elongation factor 4, found in Staphylococcus saprophyticus subsp. saprophyticus (strain ATCC 15305 / DSM 20229 / NCIMB 8711 / NCTC 7292 / S-41).